We begin with the raw amino-acid sequence, 61 residues long: Ferredoxin-3 (61 aa).

2 consecutive 4Fe-4S ferredoxin-type domains span residues 2 to 31 (YKIT…LQDG) and 32 to 61 (KAVA…VEEN). Residues cysteine 11 and cysteine 17 each contribute to the [3Fe-4S] cluster site. Cysteine 21, cysteine 41, cysteine 44, and cysteine 47 together coordinate [4Fe-4S] cluster. Cysteine 51 is a [3Fe-4S] cluster binding site.

It depends on [3Fe-4S] cluster as a cofactor. Requires [4Fe-4S] cluster as cofactor.

In terms of biological role, ferredoxins are iron-sulfur proteins that transfer electrons in a wide variety of metabolic reactions. The polypeptide is Ferredoxin-3 (Desulfocurvibacter africanus (Desulfovibrio africanus)).